Reading from the N-terminus, the 146-residue chain is Universal stress protein A homolog 2 (146 aa).

Belongs to the universal stress protein A family. In terms of assembly, homodimer.

The protein resides in the cytoplasm. Involved in stress response. The protein is Universal stress protein A homolog 2 (uspA2) of Coxiella burnetii (strain RSA 493 / Nine Mile phase I).